A 205-amino-acid polypeptide reads, in one-letter code: ATP-dependent Clp protease proteolytic subunit (205 aa).

The Nucleophile role is filled by Ser-101. His-126 is an active-site residue.

This sequence belongs to the peptidase S14 family. Component of the chloroplastic Clp protease core complex.

Its subcellular location is the plastid. It is found in the chloroplast stroma. The catalysed reaction is Hydrolysis of proteins to small peptides in the presence of ATP and magnesium. alpha-casein is the usual test substrate. In the absence of ATP, only oligopeptides shorter than five residues are hydrolyzed (such as succinyl-Leu-Tyr-|-NHMec, and Leu-Tyr-Leu-|-Tyr-Trp, in which cleavage of the -Tyr-|-Leu- and -Tyr-|-Trp bonds also occurs).. In terms of biological role, cleaves peptides in various proteins in a process that requires ATP hydrolysis. Has a chymotrypsin-like activity. Plays a major role in the degradation of misfolded proteins. This is ATP-dependent Clp protease proteolytic subunit from Pinus contorta (Shore pine).